A 232-amino-acid polypeptide reads, in one-letter code: Lipoprotein-releasing system ATP-binding protein LolD (232 aa).

Positions 11–231 (VYLHDIKREY…SLENGHVVEL (221 aa)) constitute an ABC transporter domain. 47–54 (APSGSGKS) is an ATP binding site.

This sequence belongs to the ABC transporter superfamily. Lipoprotein translocase (TC 3.A.1.125) family. In terms of assembly, the complex is composed of two ATP-binding proteins (LolD) and two transmembrane proteins (LolC and LolE).

It is found in the cell inner membrane. Functionally, part of the ABC transporter complex LolCDE involved in the translocation of mature outer membrane-directed lipoproteins, from the inner membrane to the periplasmic chaperone, LolA. Responsible for the formation of the LolA-lipoprotein complex in an ATP-dependent manner. This is Lipoprotein-releasing system ATP-binding protein LolD from Nitrobacter winogradskyi (strain ATCC 25391 / DSM 10237 / CIP 104748 / NCIMB 11846 / Nb-255).